The sequence spans 209 residues: MAKLYFYYAAMNAGKSTVLLQSSYNYRERGMQTLLFTPAIDTRYQYGTICSRIGLSEQAYAFNNTDNLYVLTQELQLQATKYSCVLIDEAQFLTREQVYQLTEITDQMSIPVLAYGLRTDFRGELFPGSQFLLAWADELIELKTICHCGRKATMNMRIDENGQAVVEGEQVLIGGNESYVATCRLHYKRGEAGKTFPGNKLFNKDTNTF.

Residues 9–16 (AAMNAGKS) and 88–91 (DEAQ) contribute to the ATP site. The active-site Proton acceptor is the Glu-89. Residues Cys-146, Cys-148, Cys-183, and His-186 each coordinate Zn(2+).

It belongs to the thymidine kinase family. As to quaternary structure, homotetramer.

It localises to the cytoplasm. It carries out the reaction thymidine + ATP = dTMP + ADP + H(+). In Legionella pneumophila (strain Lens), this protein is Thymidine kinase.